The primary structure comprises 288 residues: Homoserine kinase (288 aa).

Proline 79–alanine 89 is a binding site for ATP.

Belongs to the GHMP kinase family. Homoserine kinase subfamily.

The protein resides in the cytoplasm. It carries out the reaction L-homoserine + ATP = O-phospho-L-homoserine + ADP + H(+). The protein operates within amino-acid biosynthesis; L-threonine biosynthesis; L-threonine from L-aspartate: step 4/5. Its function is as follows. Catalyzes the ATP-dependent phosphorylation of L-homoserine to L-homoserine phosphate. The sequence is that of Homoserine kinase from Listeria monocytogenes serovar 1/2a (strain ATCC BAA-679 / EGD-e).